The following is a 342-amino-acid chain: Ribosomal RNA small subunit methyltransferase C (342 aa).

This sequence belongs to the methyltransferase superfamily. RsmC family. Monomer.

It localises to the cytoplasm. It carries out the reaction guanosine(1207) in 16S rRNA + S-adenosyl-L-methionine = N(2)-methylguanosine(1207) in 16S rRNA + S-adenosyl-L-homocysteine + H(+). Specifically methylates the guanine in position 1207 of 16S rRNA in the 30S particle. The sequence is that of Ribosomal RNA small subunit methyltransferase C from Salmonella heidelberg (strain SL476).